We begin with the raw amino-acid sequence, 379 residues long: NADH-quinone oxidoreductase subunit D 1 (379 aa).

This sequence belongs to the complex I 49 kDa subunit family. In terms of assembly, NDH-1 is composed of 14 different subunits. Subunits NuoB, C, D, E, F, and G constitute the peripheral sector of the complex.

The protein resides in the cell inner membrane. It catalyses the reaction a quinone + NADH + 5 H(+)(in) = a quinol + NAD(+) + 4 H(+)(out). NDH-1 shuttles electrons from NADH, via FMN and iron-sulfur (Fe-S) centers, to quinones in the respiratory chain. The immediate electron acceptor for the enzyme in this species is believed to be ubiquinone. Couples the redox reaction to proton translocation (for every two electrons transferred, four hydrogen ions are translocated across the cytoplasmic membrane), and thus conserves the redox energy in a proton gradient. The protein is NADH-quinone oxidoreductase subunit D 1 of Anaeromyxobacter sp. (strain K).